Here is a 268-residue protein sequence, read N- to C-terminus: Ribosomal RNA small subunit methyltransferase A (268 aa).

Residues N16, L18, G43, E64, D89, and N110 each coordinate S-adenosyl-L-methionine.

It belongs to the class I-like SAM-binding methyltransferase superfamily. rRNA adenine N(6)-methyltransferase family. RsmA subfamily.

The protein resides in the cytoplasm. The catalysed reaction is adenosine(1518)/adenosine(1519) in 16S rRNA + 4 S-adenosyl-L-methionine = N(6)-dimethyladenosine(1518)/N(6)-dimethyladenosine(1519) in 16S rRNA + 4 S-adenosyl-L-homocysteine + 4 H(+). Specifically dimethylates two adjacent adenosines (A1518 and A1519) in the loop of a conserved hairpin near the 3'-end of 16S rRNA in the 30S particle. May play a critical role in biogenesis of 30S subunits. In Pseudomonas syringae pv. tomato (strain ATCC BAA-871 / DC3000), this protein is Ribosomal RNA small subunit methyltransferase A.